We begin with the raw amino-acid sequence, 334 residues long: N-chimaerin (334 aa).

Positions 1-10 (MPSKESWSGR) are enriched in polar residues. The interval 1–22 (MPSKESWSGRKTNRATVHKSKQ) is disordered. At threonine 67 the chain carries Phosphothreonine. The Phorbol-ester/DAG-type zinc finger occupies 80 to 130 (VHNFKVHTFRGPHWCEYCANFMWGLIAQGVKCADCGLNVHKQCSKMVPNDC). The Rho-GAP domain maps to 143–334 (CDLTTLVKAH…LLIKNEDILF (192 aa)). Threonine 215 carries the post-translational modification Phosphothreonine.

As to quaternary structure, interacts with EPHA4; effector of EPHA4 in axon guidance linking EPHA4 activation to RAC1 regulation. Phosphorylated. Phosphorylation is EPHA4 kinase activity-dependent. As to expression, in neurons in brain regions that are involved in learning and memory processes.

In terms of biological role, GTPase-activating protein for p21-rac and a phorbol ester receptor. Involved in the assembly of neuronal locomotor circuits as a direct effector of EPHA4 in axon guidance. The sequence is that of N-chimaerin (Chn1) from Rattus norvegicus (Rat).